Reading from the N-terminus, the 336-residue chain is Serpentine receptor class alpha-10 (336 aa).

Residues 1-28 (MGPITANSSKCATEDQMILQTSLLLRIN) are Extracellular-facing. The helical transmembrane segment at 29–49 (VIIMTIVAIITFILTYKALFI) threads the bilayer. The Cytoplasmic segment spans residues 50-61 (LKIRPIFHSSTK). A helical transmembrane segment spans residues 62 to 82 (ILLYTSLLFVNVHAVIFMVIQ). At 83-107 (NTALIRSFTLSDKPCEIMRTTLECR) the chain is on the extracellular side. A helical membrane pass occupies residues 108-128 (FQNHVLIFGIAGVNFNQFGLT). At 129–148 (VDRLLATIIPQSYSHMGALP) the chain is on the cytoplasmic side. A helical membrane pass occupies residues 149 to 169 (GVILSVLVVACSIAAPLIIAI). Over 170–192 (GDPYDDIVPNCFFFPEHSAPRAN) the chain is Extracellular. Residues 193-213 (IFLVTLSTLVITSIFLNFIII) form a helical membrane-spanning segment. The Cytoplasmic portion of the chain corresponds to 214-243 (YANKKLEKGCRTRFYVTQRYQKREALISTR). The chain crosses the membrane as a helical span at residues 244 to 264 (IISYIAASQFLGLTLYSTMVL). Residues 265-280 (TLRLHKSMIPISIYHN) lie on the Extracellular side of the membrane. A helical membrane pass occupies residues 281 to 301 (MVWWAYTVPFAAVSLPALLIY). Residues 302–336 (RINQVGSNRKRVINRITAKVETQEEHMKSLKELWA) are Cytoplasmic-facing.

This sequence belongs to the nematode receptor-like protein sra family. Expressed in the URX sensory neuron, the ALA interneuron and in additional interneurons, pharyngeal neurons and muscle.

It localises to the membrane. This chain is Serpentine receptor class alpha-10 (sra-10), found in Caenorhabditis elegans.